A 605-amino-acid chain; its full sequence is SET domain-containing protein SNOG_11806 (605 aa).

Residues 68–132 (TLDLTGMKTP…SRKGTGGLRV (65 aa)) form a disordered region. A compositionally biased stretch (polar residues) spans 75-89 (KTPQPSRSPTVTRNV). Positions 104–115 (ESADDDDDDLQD) are enriched in acidic residues. Residues 473–579 (PPVQIYRTAE…AGSEITVDYG (107 aa)) enclose the SET domain.

The protein belongs to the class V-like SAM-binding methyltransferase superfamily.

This Phaeosphaeria nodorum (strain SN15 / ATCC MYA-4574 / FGSC 10173) (Glume blotch fungus) protein is SET domain-containing protein SNOG_11806.